The primary structure comprises 282 residues: DNA-dependent metalloprotease WSS1 homolog 2 (282 aa).

The region spanning 1–75 is the Ubiquitin-like domain; it reads MELKFSCRGN…CLIRQDKDIV (75 aa). In terms of domain architecture, WLM spans 99–274; the sequence is PHTTPKPASI…LLAAAERRKQ (176 aa). His202 is a Zn(2+) binding site. Glu203 is a catalytic residue. 2 residues coordinate Zn(2+): His206 and His212. The tract at residues 234–282 is disordered; it reads GKPGSYVSDRASYTPQQDNDDEDQKNHRRDLLLAAAERRKQSGSKVQKE. The segment covering 269–282 has biased composition (basic and acidic residues); sequence AERRKQSGSKVQKE.

Belongs to the peptidase M3 family. WSS1-like metalloprotease (WLM) subfamily. It depends on Zn(2+) as a cofactor.

The protein resides in the cytoplasm. It localises to the nucleus. In terms of biological role, metalloendopeptidase that acts selectively on DNA-binding proteins. DNA is needed to bring the protease and substrates together to enable proteolysis. Involved in the repair of toxic DNA-protein cross-links (DPCs) such as covalently trapped topoisomerase 1 (TOP1) adducts on DNA lesions or DPCs induced by reactive compounds such as formaldehyde. This Schizosaccharomyces pombe (strain 972 / ATCC 24843) (Fission yeast) protein is DNA-dependent metalloprotease WSS1 homolog 2.